Reading from the N-terminus, the 474-residue chain is tRNA-2-methylthio-N(6)-dimethylallyladenosine synthase (474 aa).

The MTTase N-terminal domain maps to 3–120 (KKLHIKTWGC…LPDMIEQVRR (118 aa)). [4Fe-4S] cluster-binding residues include Cys-12, Cys-49, Cys-83, Cys-157, Cys-161, and Cys-164. Positions 143–375 (RAEGPTAFVS…QDRITQQAMR (233 aa)) constitute a Radical SAM core domain. One can recognise a TRAM domain in the interval 378 to 441 (RHMMGTVQRI…TNSLRGKFIR (64 aa)).

This sequence belongs to the methylthiotransferase family. MiaB subfamily. In terms of assembly, monomer. Requires [4Fe-4S] cluster as cofactor.

It localises to the cytoplasm. It carries out the reaction N(6)-dimethylallyladenosine(37) in tRNA + (sulfur carrier)-SH + AH2 + 2 S-adenosyl-L-methionine = 2-methylsulfanyl-N(6)-dimethylallyladenosine(37) in tRNA + (sulfur carrier)-H + 5'-deoxyadenosine + L-methionine + A + S-adenosyl-L-homocysteine + 2 H(+). Catalyzes the methylthiolation of N6-(dimethylallyl)adenosine (i(6)A), leading to the formation of 2-methylthio-N6-(dimethylallyl)adenosine (ms(2)i(6)A) at position 37 in tRNAs that read codons beginning with uridine. This is tRNA-2-methylthio-N(6)-dimethylallyladenosine synthase from Shewanella putrefaciens (strain CN-32 / ATCC BAA-453).